Here is a 238-residue protein sequence, read N- to C-terminus: Sugar fermentation stimulation protein homolog (238 aa).

This sequence belongs to the SfsA family.

The polypeptide is Sugar fermentation stimulation protein homolog (Brucella abortus (strain S19)).